The chain runs to 369 residues: Cobalt-precorrin-5B C(1)-methyltransferase (369 aa).

It belongs to the CbiD family.

The catalysed reaction is Co-precorrin-5B + S-adenosyl-L-methionine = Co-precorrin-6A + S-adenosyl-L-homocysteine. It functions in the pathway cofactor biosynthesis; adenosylcobalamin biosynthesis; cob(II)yrinate a,c-diamide from sirohydrochlorin (anaerobic route): step 6/10. Functionally, catalyzes the methylation of C-1 in cobalt-precorrin-5B to form cobalt-precorrin-6A. The polypeptide is Cobalt-precorrin-5B C(1)-methyltransferase (Leptospira borgpetersenii serovar Hardjo-bovis (strain JB197)).